The primary structure comprises 833 residues: MRYSKLFLCAGLTLATLPCWGRAYTFDSTMLDTNSGESIDVSLFNQGLQLPGNYFVNVFVNGRKVDSGNIDFRLEKHNGKELLWPCLSSLQLTKYGIDIDKYPDLIKSGTEQCVDLLAIPHSDVQFYFNQQKLSLIVPPQALLPRFDGIMPMQLWDDGIPALFMNYNTNMQTRKFREGGKSLDSYYAQLQPGLNIGAWRFRSSTSWWKQQGWQRSYIYAERGLNTIKSRLTLGETYSDSSIFDSIPIKGIKIASDESMVPYYQWNFAPVVRGIARTQARVEVLRDGYTVSNELVPSGPFELANLPLGGGSGELKVIIHESDGTKQVFTVPYDTPAVALRKGYFEYSMMGGEYRPANDLTQTSYVGALGMKYGLPRNLTLYGGLQGSQNYHAAALGIGAMLGDFGAISTDVTQADSQKNKQKKESGQRWRVRYNKYLQSGTSLNIASEEYATEGFNKLADTLNTYCKPNTRNDCRFDYAKPKNKVQFNLSQSIPGSGTLNFSGYRKNYWRDSRSTTSFSVGYNHFFRNGMSLTLNLSKTQNINKYGEKTSELLSNIWLSFPLSRWLGNNSINSNYQMTSDSHGNTTHEVGVYGEAFDRQLYWDVRERFNEKGRKYTSNALNLNYRGTYGEISGNYSYDQTQSQLGIGVNGNMVITQYGITAGQKTGDTIALVQAPDISGASVGYWPGMKTDFRGYTNYGYLTPYRENKVEINPVTLPNDAEITNNIVSVIPTKGAVVLAKFNARIGGRLFLHLKRSDNKPVPFGSIVTIEGQSSSSGIVGDNSGVYLTGLPKKSKILVKWGRDKNQSCSSNVVLPEKTDISGAYRLSTTCILNN.

A signal peptide spans 1–25 (MRYSKLFLCAGLTLATLPCWGRAYT). An intrachain disulfide couples Cys-807 to Cys-829.

The protein belongs to the fimbrial export usher family.

The protein localises to the cell outer membrane. In terms of biological role, a probable role in capsular biogenesis. It is likely that the caf1A molecule binds F1 antigen subunits during the extracellular secretion process. This chain is F1 capsule-anchoring protein (caf1A), found in Yersinia pestis.